The following is a 136-amino-acid chain: Nucleoside diphosphate kinase (136 aa).

ATP is bound by residues K10, F58, R86, T92, R104, and N114. H117 serves as the catalytic Pros-phosphohistidine intermediate.

It belongs to the NDK family. Homotetramer. It depends on Mg(2+) as a cofactor.

The protein localises to the cytoplasm. It carries out the reaction a 2'-deoxyribonucleoside 5'-diphosphate + ATP = a 2'-deoxyribonucleoside 5'-triphosphate + ADP. The catalysed reaction is a ribonucleoside 5'-diphosphate + ATP = a ribonucleoside 5'-triphosphate + ADP. Major role in the synthesis of nucleoside triphosphates other than ATP. The ATP gamma phosphate is transferred to the NDP beta phosphate via a ping-pong mechanism, using a phosphorylated active-site intermediate. This Mycobacterium sp. (strain MCS) protein is Nucleoside diphosphate kinase.